Here is an 873-residue protein sequence, read N- to C-terminus: Zinc fingers and homeoboxes protein 1 (873 aa).

Thr36 bears the Phosphothreonine mark. The interval Ala41 to Asn63 is disordered. Residues Ser45, Ser47, and Ser48 each carry the phosphoserine modification. The segment covering Glu50–Asn63 has biased composition (basic and acidic residues). 2 C2H2-type zinc fingers span residues Tyr70 to His93 and Tyr102 to His125. Lys159 participates in a covalent cross-link: Glycyl lysine isopeptide (Lys-Gly) (interchain with G-Cter in SUMO2). The interval Val198–Ala247 is disordered. Position 202 is a phosphoserine (Ser202). Low complexity predominate over residues Glu223 to Thr238. The segment at Asn272–Pro432 is required for dimerization. The tract at residues Asn272 to Phe564 is required for interaction with NFYA. The homeobox 1 DNA-binding region spans Asn284–Glu346. Positions Ser429–Glu456 are disordered. Glycyl lysine isopeptide (Lys-Gly) (interchain with G-Cter in SUMO2) cross-links involve residues Lys441 and Lys485. Residues Ser464 to Gln526 constitute a DNA-binding region (homeobox 2). 3 disordered regions span residues Asp541–Ala568, Asp627–Thr668, and Ser731–Asn767. A DNA-binding region (homeobox 3) is located at residues Pro569–Ile630. Residue Lys629 forms a Glycyl lysine isopeptide (Lys-Gly) (interchain with G-Cter in SUMO2) linkage. Residue Ser648 is modified to Phosphoserine. Positions Gly660 to Trp722 form a DNA-binding region, homeobox 4. Residues Leu734–Thr768 are required for nuclear localization. Positions Leu740–Lys764 are enriched in basic residues. At Ser774 the chain carries Phosphoserine. Positions Lys777–Phe832 form a DNA-binding region, homeobox 5. The segment at Ile829–Asp873 is disordered. Positions Leu831–Thr857 are enriched in acidic residues. Positions Leu831 to Asp873 are required for repressor activity. Positions His863–Asp873 are enriched in basic residues.

The protein belongs to the ZHX family. As to quaternary structure, forms homodimers. Heterodimer (via HD1 domain) with ZHX2 (via HD1 domain). Also forms a heterodimer with ZHX3 which is a prerequisite for repressor activity. Interacts with ATF7IP and NFYA. Interacts (via homeobox domains) with DNMT3B (via PWWP domain). In terms of tissue distribution, widely expressed with highest levels in brain.

It localises to the nucleus. In terms of biological role, acts as a transcriptional repressor. Increases DNMT3B-mediated repressive transcriptional activity when DNMT3B is tethered to DNA. May link molecule between DNMT3B and other co-repressor proteins. This Mus musculus (Mouse) protein is Zinc fingers and homeoboxes protein 1 (Zhx1).